The chain runs to 293 residues: Ribosomal protein L11 methyltransferase (293 aa).

4 residues coordinate S-adenosyl-L-methionine: Thr-145, Gly-166, Asp-188, and Asn-230.

This sequence belongs to the methyltransferase superfamily. PrmA family.

It is found in the cytoplasm. It catalyses the reaction L-lysyl-[protein] + 3 S-adenosyl-L-methionine = N(6),N(6),N(6)-trimethyl-L-lysyl-[protein] + 3 S-adenosyl-L-homocysteine + 3 H(+). Functionally, methylates ribosomal protein L11. The protein is Ribosomal protein L11 methyltransferase of Shewanella sediminis (strain HAW-EB3).